Here is a 264-residue protein sequence, read N- to C-terminus: ATP synthase subunit a (264 aa).

7 consecutive transmembrane segments (helical) span residues 41–61, 99–119, 129–149, 156–176, 194–214, 217–237, and 238–258; these read ITNIGFYLTMGAFFLLIINLL, IYFPFIYALFIFILINNLIGM, HFVLTFALSFTIVLGATILGF, FFSLLVPAGCPLGLLPLLVLI, ANILSGHMLLHILAGFTYNIM, GIIFFFLGLIPLAFIIAFSGL, and ELGIAFIQAQVFVVLTSGYIK.

The protein belongs to the ATPase A chain family. In terms of assembly, F-type ATPases have 2 components, CF(1) - the catalytic core - and CF(0) - the membrane proton channel. CF(1) has five subunits: alpha(3), beta(3), gamma(1), delta(1), epsilon(1). CF(0) has three main subunits: a, b and c.

The protein resides in the mitochondrion inner membrane. Its function is as follows. Mitochondrial membrane ATP synthase (F(1)F(0) ATP synthase or Complex V) produces ATP from ADP in the presence of a proton gradient across the membrane which is generated by electron transport complexes of the respiratory chain. F-type ATPases consist of two structural domains, F(1) - containing the extramembraneous catalytic core and F(0) - containing the membrane proton channel, linked together by a central stalk and a peripheral stalk. During catalysis, ATP synthesis in the catalytic domain of F(1) is coupled via a rotary mechanism of the central stalk subunits to proton translocation. Key component of the proton channel; it may play a direct role in the translocation of protons across the membrane. The sequence is that of ATP synthase subunit a (ATP6) from Podospora anserina (strain S / ATCC MYA-4624 / DSM 980 / FGSC 10383) (Pleurage anserina).